The primary structure comprises 385 residues: Deoxyguanosinetriphosphate triphosphohydrolase-like protein (385 aa).

Residues 62–197 (RLTHSLEVAQ…VSLADDIAYS (136 aa)) form the HD domain.

It belongs to the dGTPase family. Type 2 subfamily.

The protein is Deoxyguanosinetriphosphate triphosphohydrolase-like protein of Neorickettsia sennetsu (strain ATCC VR-367 / Miyayama) (Ehrlichia sennetsu).